Reading from the N-terminus, the 429-residue chain is Bifunctional protein GlmU (429 aa).

The segment at 1 to 223 (MKTSILILAA…EDEFMGINDK (223 aa)) is pyrophosphorylase. Residues 8–11 (LAAG), Lys22, Gln74, and 81–82 (GT) contribute to the UDP-N-acetyl-alpha-D-glucosamine site. Residue Asp102 participates in Mg(2+) binding. UDP-N-acetyl-alpha-D-glucosamine contacts are provided by Gly135, Glu149, Asn164, and Asn221. Residue Asn221 participates in Mg(2+) binding. Residues 224-244 (FELSIAENFMQEKIKKYWMQQ) form a linker region. Residues 245–429 (GVIFHLPQST…KNYYYKKFQK (185 aa)) form an N-acetyltransferase region. UDP-N-acetyl-alpha-D-glucosamine is bound by residues Arg308 and Lys325. The Proton acceptor role is filled by His336. The UDP-N-acetyl-alpha-D-glucosamine site is built by Tyr339 and Asn350. Acetyl-CoA contacts are provided by residues 359 to 360 (NY), Ser378, Ala396, and Arg413.

The protein in the N-terminal section; belongs to the N-acetylglucosamine-1-phosphate uridyltransferase family. In the C-terminal section; belongs to the transferase hexapeptide repeat family. Homotrimer. Mg(2+) is required as a cofactor.

Its subcellular location is the cytoplasm. It carries out the reaction alpha-D-glucosamine 1-phosphate + acetyl-CoA = N-acetyl-alpha-D-glucosamine 1-phosphate + CoA + H(+). The enzyme catalyses N-acetyl-alpha-D-glucosamine 1-phosphate + UTP + H(+) = UDP-N-acetyl-alpha-D-glucosamine + diphosphate. The protein operates within nucleotide-sugar biosynthesis; UDP-N-acetyl-alpha-D-glucosamine biosynthesis; N-acetyl-alpha-D-glucosamine 1-phosphate from alpha-D-glucosamine 6-phosphate (route II): step 2/2. It functions in the pathway nucleotide-sugar biosynthesis; UDP-N-acetyl-alpha-D-glucosamine biosynthesis; UDP-N-acetyl-alpha-D-glucosamine from N-acetyl-alpha-D-glucosamine 1-phosphate: step 1/1. Its pathway is bacterial outer membrane biogenesis; LPS lipid A biosynthesis. Catalyzes the last two sequential reactions in the de novo biosynthetic pathway for UDP-N-acetylglucosamine (UDP-GlcNAc). The C-terminal domain catalyzes the transfer of acetyl group from acetyl coenzyme A to glucosamine-1-phosphate (GlcN-1-P) to produce N-acetylglucosamine-1-phosphate (GlcNAc-1-P), which is converted into UDP-GlcNAc by the transfer of uridine 5-monophosphate (from uridine 5-triphosphate), a reaction catalyzed by the N-terminal domain. The protein is Bifunctional protein GlmU of Campylobacter jejuni subsp. doylei (strain ATCC BAA-1458 / RM4099 / 269.97).